The chain runs to 1237 residues: Rho guanine nucleotide exchange factor 10-like protein (1237 aa).

Disordered stretches follow at residues 1 to 117 (MASS…SSRR) and 132 to 203 (YDDV…QPKM). Over residues 25-45 (EAEDDPGEGFEFDDSDDDEDT) the composition is skewed to acidic residues. The residue at position 39 (serine 39) is a Phosphoserine. 2 positions are modified to phosphotyrosine: tyrosine 132 and tyrosine 153. Composition is skewed to basic and acidic residues over residues 146-163 (EAER…RAPQ) and 184-194 (EEAKPEAEPTK). Serine 241 is modified (phosphoserine). Residues 276-463 (VRRHILGSIV…ETLAEKLNEQ (188 aa)) form the DH domain. Disordered stretches follow at residues 1091–1118 (QEEA…PASH) and 1142–1164 (PGPL…HSEE).

In terms of assembly, interacts with RHOA, RHOB and RHOC.

It localises to the cytoplasm. Its function is as follows. Acts as a guanine nucleotide exchange factor (GEF) for RHOA, RHOB and RHOC. The protein is Rho guanine nucleotide exchange factor 10-like protein (ARHGEF10L) of Bos taurus (Bovine).